Consider the following 205-residue polypeptide: Dephospho-CoA kinase (205 aa).

Residues 7–205 (IIGITGRIAS…QEIINYERFE (199 aa)) enclose the DPCK domain. Residue 15 to 20 (ASGKDA) coordinates ATP.

This sequence belongs to the CoaE family.

It is found in the cytoplasm. The catalysed reaction is 3'-dephospho-CoA + ATP = ADP + CoA + H(+). Its pathway is cofactor biosynthesis; coenzyme A biosynthesis; CoA from (R)-pantothenate: step 5/5. Catalyzes the phosphorylation of the 3'-hydroxyl group of dephosphocoenzyme A to form coenzyme A. The sequence is that of Dephospho-CoA kinase from Borrelia garinii subsp. bavariensis (strain ATCC BAA-2496 / DSM 23469 / PBi) (Borreliella bavariensis).